The following is a 401-amino-acid chain: LL-diaminopimelate aminotransferase (401 aa).

2 residues coordinate substrate: tyrosine 15 and glycine 42. Pyridoxal 5'-phosphate contacts are provided by residues tyrosine 72, 108–109 (AK), tyrosine 132, asparagine 176, tyrosine 207, and 235–237 (SFS). 3 residues coordinate substrate: lysine 109, tyrosine 132, and asparagine 176. Position 238 is an N6-(pyridoxal phosphate)lysine (lysine 238). Pyridoxal 5'-phosphate is bound by residues arginine 246 and asparagine 281. Substrate contacts are provided by asparagine 281 and arginine 377.

It belongs to the class-I pyridoxal-phosphate-dependent aminotransferase family. LL-diaminopimelate aminotransferase subfamily. Homodimer. Pyridoxal 5'-phosphate serves as cofactor.

It carries out the reaction (2S,6S)-2,6-diaminopimelate + 2-oxoglutarate = (S)-2,3,4,5-tetrahydrodipicolinate + L-glutamate + H2O + H(+). The protein operates within amino-acid biosynthesis; L-lysine biosynthesis via DAP pathway; LL-2,6-diaminopimelate from (S)-tetrahydrodipicolinate (aminotransferase route): step 1/1. In terms of biological role, involved in the synthesis of meso-diaminopimelate (m-DAP or DL-DAP), required for both lysine and peptidoglycan biosynthesis. Catalyzes the direct conversion of tetrahydrodipicolinate to LL-diaminopimelate. This chain is LL-diaminopimelate aminotransferase, found in Azobacteroides pseudotrichonymphae genomovar. CFP2.